The sequence spans 553 residues: Urocanate hydratase (553 aa).

NAD(+) is bound by residues 45–46 (GG), glutamine 123, 169–171 (GMG), aspartate 189, arginine 194, 235–236 (NA), 256–260 (QTSAH), 266–267 (YV), tyrosine 315, and glycine 485.

It belongs to the urocanase family. It depends on NAD(+) as a cofactor.

The protein resides in the cytoplasm. It catalyses the reaction 4-imidazolone-5-propanoate = trans-urocanate + H2O. It participates in amino-acid degradation; L-histidine degradation into L-glutamate; N-formimidoyl-L-glutamate from L-histidine: step 2/3. Functionally, catalyzes the conversion of urocanate to 4-imidazolone-5-propionate. The protein is Urocanate hydratase of Staphylococcus aureus (strain COL).